Consider the following 867-residue polypeptide: Prominin-1 (867 aa).

The first 19 residues, Met1–Ser19, serve as a signal peptide directing secretion. Residues Glu20 to Glu107 are Extracellular-facing. Residues Ile108–Gly128 form a helical membrane-spanning segment. Topologically, residues Cys129–Cys158 are cytoplasmic. Residues Leu159 to Val179 traverse the membrane as a helical segment. The Extracellular segment spans residues Ala180–Tyr434. An N6-acetyllysine mark is found at Lys226, Lys258, and Lys265. N-linked (GlcNAc...) asparagine glycans are attached at residues Asn273, Asn291, Asn332, Asn374, and Asn415. A helical transmembrane segment spans residues Trp435–Leu455. Residues Gly456–Gly487 lie on the Cytoplasmic side of the membrane. A helical membrane pass occupies residues Val488–Val508. The Extracellular segment spans residues Gly509–Asn794. Asn554, Asn581, and Asn732 each carry an N-linked (GlcNAc...) asparagine glycan. A helical transmembrane segment spans residues Leu795–Ile815. The Cytoplasmic portion of the chain corresponds to Lys816–Tyr867. Phosphoserine is present on Ser865.

The protein belongs to the prominin family. In terms of assembly, interacts with CDHR1 and with actin filaments. Interacts with NAT8 and NAT8B. Acetylation at Lys-226, Lys-258 and Lys-265 by NAT8 and NAT8B may control PROM1 protein expression and its function in cell apoptosis. As to expression, in the submandibular gland, expressed on the apical side of epithelial cells. In the parotid gland, expressed in the intercalated ducts. In the sublingual gland, expressed in intercalated ducts. In the extraorbital lacrimal gland, expressed in the intercalated tubules and larger intralobular ducts. Expressed in the retina. Present in urine within small membrane particles (at protein level). In the embryo, expressed on the apical side of neuroepithelial cells and of other epithelia such as lung buds, gut and ureter buds. In the adult, expressed at the apical side of the kidney tubules and of the ependymal layer of the brain. Not expressed in gut, liver, lung, pituitary, adrenal, heart or spleen. Localized to the nascent disk membranes at the base of the rod outer segment in the retina (at protein level).

The protein localises to the apical cell membrane. Its subcellular location is the cell projection. The protein resides in the microvillus membrane. It is found in the cilium. It localises to the photoreceptor outer segment. The protein localises to the endoplasmic reticulum. Its subcellular location is the endoplasmic reticulum-Golgi intermediate compartment. May play a role in cell differentiation, proliferation and apoptosis. Binds cholesterol in cholesterol-containing plasma membrane microdomains and may play a role in the organization of the apical plasma membrane in epithelial cells. During early retinal development acts as a key regulator of disk morphogenesis. Involved in regulation of MAPK and Akt signaling pathways. In neuroblastoma cells suppresses cell differentiation such as neurite outgrowth in a RET-dependent manner. This is Prominin-1 (Prom1) from Mus musculus (Mouse).